We begin with the raw amino-acid sequence, 393 residues long: Elongation factor Tu (393 aa).

The tr-type G domain maps to 10–203 (KPHVNIGTIG…AVDDYIPEPV (194 aa)). Residues 19-26 (GHVDHGKT) form a G1 region. GTP is bound at residue 19–26 (GHVDHGKT). T26 is a Mg(2+) binding site. Residues 60 to 64 (GITIS) are G2. The segment at 81 to 84 (DCPG) is G3. GTP is bound by residues 81–85 (DCPGH) and 136–139 (NKVD). Residues 136–139 (NKVD) are G4. The tract at residues 173 to 175 (SAL) is G5.

It belongs to the TRAFAC class translation factor GTPase superfamily. Classic translation factor GTPase family. EF-Tu/EF-1A subfamily. As to quaternary structure, monomer.

The protein resides in the cytoplasm. It carries out the reaction GTP + H2O = GDP + phosphate + H(+). Functionally, GTP hydrolase that promotes the GTP-dependent binding of aminoacyl-tRNA to the A-site of ribosomes during protein biosynthesis. This is Elongation factor Tu from Chlorobaculum parvum (strain DSM 263 / NCIMB 8327) (Chlorobium vibrioforme subsp. thiosulfatophilum).